We begin with the raw amino-acid sequence, 523 residues long: 2-isopropylmalate synthase (523 aa).

The Pyruvate carboxyltransferase domain maps to 5–267 (VIIFDTTLRD…ETGINAKEIH (263 aa)). Mn(2+)-binding residues include Asp-14, His-202, His-204, and Asn-238. The tract at residues 392-523 (KLAQLVVHSD…QKDRSELGGV (132 aa)) is regulatory domain.

This sequence belongs to the alpha-IPM synthase/homocitrate synthase family. LeuA type 1 subfamily. As to quaternary structure, homodimer. Requires Mn(2+) as cofactor.

Its subcellular location is the cytoplasm. The enzyme catalyses 3-methyl-2-oxobutanoate + acetyl-CoA + H2O = (2S)-2-isopropylmalate + CoA + H(+). The protein operates within amino-acid biosynthesis; L-leucine biosynthesis; L-leucine from 3-methyl-2-oxobutanoate: step 1/4. In terms of biological role, catalyzes the condensation of the acetyl group of acetyl-CoA with 3-methyl-2-oxobutanoate (2-ketoisovalerate) to form 3-carboxy-3-hydroxy-4-methylpentanoate (2-isopropylmalate). This chain is 2-isopropylmalate synthase, found in Shewanella sediminis (strain HAW-EB3).